A 583-amino-acid chain; its full sequence is uncharacterized protein (583 aa).

This is an uncharacterized protein from Schizosaccharomyces pombe (strain 972 / ATCC 24843) (Fission yeast).